A 559-amino-acid polypeptide reads, in one-letter code: Membrane protein insertase YidC (559 aa).

A helical membrane pass occupies residues 7-24; that stretch reads ILWVIFSMSLVLLYDNWQ. Composition is skewed to low complexity over residues 45-55 and 63-82; these read APAASGAAAQG and QPAT…QAAA. The segment at 45–82 is disordered; the sequence is APAASGAAAQGDVPKANVQPATGTSAAPAAGAAPQAAA. A run of 5 helical transmembrane segments spans residues 338-358, 364-384, 434-454, 472-492, and 507-527; these read LELV…FWLL, FLGN…LVFF, LGGC…YWVL, LSVP…MFVQ, and VMMI…AGLV.

Belongs to the OXA1/ALB3/YidC family. Type 1 subfamily. As to quaternary structure, interacts with the Sec translocase complex via SecD. Specifically interacts with transmembrane segments of nascent integral membrane proteins during membrane integration.

The protein localises to the cell inner membrane. Functionally, required for the insertion and/or proper folding and/or complex formation of integral membrane proteins into the membrane. Involved in integration of membrane proteins that insert both dependently and independently of the Sec translocase complex, as well as at least some lipoproteins. Aids folding of multispanning membrane proteins. This chain is Membrane protein insertase YidC, found in Cupriavidus taiwanensis (strain DSM 17343 / BCRC 17206 / CCUG 44338 / CIP 107171 / LMG 19424 / R1) (Ralstonia taiwanensis (strain LMG 19424)).